The sequence spans 108 residues: Bublin coiled-coil protein (108 aa).

Disordered regions lie at residues 1 to 23 (MSGP…DDDF) and 67 to 108 (RLEF…DEGS). A coiled-coil region spans residues 25–73 (SEEYEAINSMLDQINSYLDDLEERNDSLNGKLHELMESNRQARLEFRAQ). Basic and acidic residues predominate over residues 99-108 (ENDKKIDEGS).

It belongs to the UPF0184 (EST00098) family.

It is found in the cell junction. Its subcellular location is the cytoplasm. The protein localises to the cytoskeleton. Functionally, essential for intermediate filament organization in intestinal cells, interacts with intermediate filament and regulates intestinal lumen morphology. This is Bublin coiled-coil protein (bbln) from Takifugu rubripes (Japanese pufferfish).